Here is a 648-residue protein sequence, read N- to C-terminus: Transcription termination factor FttA (648 aa).

A KHa region spans residues D9–L76. A KHb region spans residues L77–P144. The interval W185 to S395 is metallo-beta-lactamase N-terminus. Zn(2+) is bound by residues H253, H255, D257, H258, H341, and D364. A beta-Casp region spans residues N396–S589. The tract at residues G590–K648 is metallo-beta-lactamase C-terminus. A Zn(2+)-binding site is contributed by H615.

The protein belongs to the metallo-beta-lactamase superfamily. RNA-metabolizing metallo-beta-lactamase-like family. FttA subfamily. Homodimer. Probably interacts transiently with RNA polymerase (RNAP), (via at least the RNAP stalk subunits Rpo4 and Rpo7), interacts transiently with the Spt4-Spt5 complex. Requires Zn(2+) as cofactor.

Transcription termination is stimulated by the Spt4-Spt5 complex. Dipicolinic acid inhibits FttA-mediated termination in vitro and inhibits growth in vivo. Functionally, terminates transcription on the whole genome. Termination is linked to FttA-mediated RNA cleavage and does not require NTP hydrolysis. Cleaves endonucleolytically at the RNA exit channel of RNA polymerase (RNAP); the 5'-3' exonuclease activity of this protein degrades the nascent RNA released from RNAP. Its function is as follows. Facilitates transcription termination; addition of this factor to stalled transcription elongation complexes (TEC) promotes nascent transcript cleavage and releases RNA polymerase (RNAP) from DNA in vitro. Transcription termination competes with productive transcription elongation. Termination is stimulated by C-rich transcripts and inhibited by G-rich transcripts; the Spt4-Spt5 complex enhances termination on C-less transcripts. Yields an approximately 100 nucleotide RNA, consistent with endonucleolytic cleavage at the RNA exit channel of RNAP. The polypeptide is Transcription termination factor FttA (Thermococcus kodakarensis (strain ATCC BAA-918 / JCM 12380 / KOD1) (Pyrococcus kodakaraensis (strain KOD1))).